Reading from the N-terminus, the 442-residue chain is D-serine dehydratase 2 (442 aa).

N6-(pyridoxal phosphate)lysine is present on Lys-118.

Belongs to the serine/threonine dehydratase family. DsdA subfamily. In terms of assembly, monomer. Requires pyridoxal 5'-phosphate as cofactor.

The catalysed reaction is D-serine = pyruvate + NH4(+). The polypeptide is D-serine dehydratase 2 (Escherichia coli O6:K15:H31 (strain 536 / UPEC)).